Consider the following 282-residue polypeptide: 2-dehydro-3-deoxyphosphooctonate aldolase (282 aa).

This sequence belongs to the KdsA family.

It localises to the cytoplasm. It catalyses the reaction D-arabinose 5-phosphate + phosphoenolpyruvate + H2O = 3-deoxy-alpha-D-manno-2-octulosonate-8-phosphate + phosphate. Its pathway is carbohydrate biosynthesis; 3-deoxy-D-manno-octulosonate biosynthesis; 3-deoxy-D-manno-octulosonate from D-ribulose 5-phosphate: step 2/3. The protein operates within bacterial outer membrane biogenesis; lipopolysaccharide biosynthesis. The sequence is that of 2-dehydro-3-deoxyphosphooctonate aldolase from Shewanella sediminis (strain HAW-EB3).